Reading from the N-terminus, the 442-residue chain is FBD-associated F-box protein At1g66310 (442 aa).

Residues 18–64 form the F-box domain; the sequence is VDWLRDLPESLLCHILLNLPTKDVVKTSVLSSKWRNLWRLVPGLDLD. An FBD domain is found at 363-415; the sequence is KRRTSVLSGPRRLLSSLEYVEIESPLTGEVFEMKLVSYLLENSPILKKLTINL.

The polypeptide is FBD-associated F-box protein At1g66310 (Arabidopsis thaliana (Mouse-ear cress)).